We begin with the raw amino-acid sequence, 398 residues long: Glia-derived nexin (398 aa).

The first 19 residues, methionine 1 to cysteine 19, serve as a signal peptide directing secretion. Asparagine 118 and asparagine 159 each carry an N-linked (GlcNAc...) asparagine glycan.

The protein belongs to the serpin family.

Its subcellular location is the secreted. It localises to the extracellular space. Functionally, serine protease inhibitor with activity toward thrombin, trypsin, and urokinase. Promotes neurite extension by inhibiting thrombin. Binds heparin. This chain is Glia-derived nexin (SERPINE2), found in Homo sapiens (Human).